Here is a 262-residue protein sequence, read N- to C-terminus: MANPYERGPNPTDALLEARSGPFSVSEERASRFGADGFGGGTIYYPRENNTYGAVAISPGYTGTQASVAWLGERIASHGFVVITIDTNTTLDQPDSRARQLNAALDYMINDASSAVRSRIDSSRLAVMGHSMGGGGTLRLASQRPDLKAAIPLTPWHLNKNWSSVRVPTLIIGADLDTIAPVLTHARPFYNSLPTSISKAYLELDGATHFAPNIPNKIIGKYSVAWLKRFVDNDTRYTQFLCPGPRDGLFGEVEEYRSTCPF.

Poly(ethylene terephthalate) is bound at residue Tyr-61. Ser-131 acts as the Nucleophile in catalysis. Met-132 and Trp-156 together coordinate poly(ethylene terephthalate). Catalysis depends on charge relay system residues Asp-177 and His-209. Residues Cys-242 and Cys-260 are joined by a disulfide bond.

The protein belongs to the AB hydrolase superfamily.

It is found in the secreted. It localises to the periplasm. The catalysed reaction is a butanoate ester + H2O = an aliphatic alcohol + butanoate + H(+). The enzyme catalyses an acetyl ester + H2O = an aliphatic alcohol + acetate + H(+). It catalyses the reaction (ethylene terephthalate)(n) + H2O = (ethylene terephthalate)(n-1) + 4-[(2-hydroxyethoxy)carbonyl]benzoate + H(+). It carries out the reaction cutin + H2O = cutin monomers.. In terms of biological role, catalyzes the hydrolysis of cutin, a polyester that forms the structure of plant cuticle. Shows esterase activity towards p-nitrophenol-linked aliphatic esters (pNP-aliphatic esters). Capable of degrading the plastic poly(ethylene terephthalate) (PET), the most abundant polyester plastic in the world. Capable of degrading the bioplastic poly(lactic acid) (PLLA). This chain is Cutinase 2, found in Thermobifida cellulosilytica.